Here is a 133-residue protein sequence, read N- to C-terminus: Putative dispanin subfamily A member 2d (133 aa).

The Extracellular portion of the chain corresponds to 1–57 (MNHTVQTFFSPVNSGQPPNYEMLKEEHKVAVLGVPHNPAPPTSTVIHIRSKTSVPHH). Lys-24 is covalently cross-linked (Glycyl lysine isopeptide (Lys-Gly) (interchain with G-Cter in ubiquitin)). The helical transmembrane segment at 58-78 (VVWSLFNTLFMNPCCLGFIAF) threads the bilayer. The Cytoplasmic portion of the chain corresponds to 79-107 (AYSVKSRDRKMVGNVTGAQAYASTTKCLN). Glycyl lysine isopeptide (Lys-Gly) (interchain with G-Cter in ubiquitin) cross-links involve residues Lys-83, Lys-88, and Lys-104. The chain crosses the membrane as a helical span at residues 108–128 (IWALILGILMTILLIIIPVLI). Residues 129-133 (FQAHR) are Extracellular-facing.

It belongs to the CD225/Dispanin family.

It localises to the membrane. This chain is Putative dispanin subfamily A member 2d, found in Homo sapiens (Human).